We begin with the raw amino-acid sequence, 55 residues long: Large ribosomal subunit protein bL33 (55 aa).

It belongs to the bacterial ribosomal protein bL33 family.

This chain is Large ribosomal subunit protein bL33 (rpmG), found in Nitrobacter hamburgensis (strain DSM 10229 / NCIMB 13809 / X14).